A 364-amino-acid polypeptide reads, in one-letter code: MSLQSIKYSRGSLEILDQLLLPGQSKYVVVRGVEDGWKVINKMQVRGAPAIAIVGCLSLAVEINPEDFENKKSLRQEIEGKLNYLVSARPTAVNMKIAADELITLANELYKDEAIDVTQMKHRFLDATEAMLKKDIADNRAIGANGAQAILQGVAKAGKAPAGSTGSVRVLTHCNTGSLATAGYGTALGVVRQLAELGKLEHVYCTETRPYNQGARLTAYELVHEKFPATLVLDSMVAALLRAKNVAAVVVGADRVASNGDTANKIGTYQIAVVAKHHDVPFYVAAPLTSIDLAIPGGDHIIIEERPDREMTHVGEHRIAAPGINCWNPAFDVTPASLITGIITERGVFKPAELKEAITKLLES.

Residue D254 is the Proton donor of the active site.

The protein belongs to the eIF-2B alpha/beta/delta subunits family. MtnA subfamily.

It localises to the cytoplasm. Its subcellular location is the nucleus. The catalysed reaction is 5-(methylsulfanyl)-alpha-D-ribose 1-phosphate = 5-(methylsulfanyl)-D-ribulose 1-phosphate. It functions in the pathway amino-acid biosynthesis; L-methionine biosynthesis via salvage pathway; L-methionine from S-methyl-5-thio-alpha-D-ribose 1-phosphate: step 1/6. Catalyzes the interconversion of methylthioribose-1-phosphate (MTR-1-P) into methylthioribulose-1-phosphate (MTRu-1-P). This chain is Methylthioribose-1-phosphate isomerase, found in Drosophila melanogaster (Fruit fly).